The sequence spans 84 residues: Beta-defensin 119 (84 aa).

A signal peptide spans Met1–Gly21. 3 disulfide bridges follow: Cys28–Cys55, Cys35–Cys49, and Cys39–Cys56.

This sequence belongs to the beta-defensin family.

The protein localises to the secreted. In terms of biological role, has antibacterial activity. The protein is Beta-defensin 119 (DEFB119) of Macaca fascicularis (Crab-eating macaque).